Consider the following 228-residue polypeptide: Acyl-protein thioesterase 1 (228 aa).

Residues Ser-119, Asp-174, and His-208 each act as charge relay system in the active site.

The protein belongs to the AB hydrolase superfamily. AB hydrolase 2 family.

The protein localises to the cytoplasm. It is found in the nucleus. The enzyme catalyses S-hexadecanoyl-L-cysteinyl-[protein] + H2O = L-cysteinyl-[protein] + hexadecanoate + H(+). Hydrolyzes fatty acids from S-acylated cysteine residues in proteins with a strong preference for palmitoylated G-alpha proteins over other acyl substrates. Mediates the deacylation of G-alpha proteins such as GPA1 in vivo, but has weak or no activity toward palmitoylated Ras proteins. Has weak lysophospholipase activity in vitro; however such activity may not exist in vivo. The protein is Acyl-protein thioesterase 1 of Kluyveromyces lactis (strain ATCC 8585 / CBS 2359 / DSM 70799 / NBRC 1267 / NRRL Y-1140 / WM37) (Yeast).